Consider the following 476-residue polypeptide: Eukaryotic translation initiation factor 3 subunit L (476 aa).

The 196-residue stretch at 257–452 (DAIRMFSHIL…DLDYALENDL (196 aa)) folds into the PCI domain.

The protein belongs to the eIF-3 subunit L family. In terms of assembly, component of the eukaryotic translation initiation factor 3 (eIF-3) complex.

The protein resides in the cytoplasm. In terms of biological role, component of the eukaryotic translation initiation factor 3 (eIF-3) complex, which is involved in protein synthesis of a specialized repertoire of mRNAs and, together with other initiation factors, stimulates binding of mRNA and methionyl-tRNAi to the 40S ribosome. The eIF-3 complex specifically targets and initiates translation of a subset of mRNAs involved in cell proliferation. The protein is Eukaryotic translation initiation factor 3 subunit L of Aspergillus niger (strain ATCC MYA-4892 / CBS 513.88 / FGSC A1513).